The sequence spans 226 residues: Triosephosphate isomerase (226 aa).

Residue 13 to 15 participates in substrate binding; it reads NFK. His97 functions as the Electrophile in the catalytic mechanism. Residue Glu145 is the Proton acceptor of the active site. Substrate is bound by residues Ile150, Gly185, and 206–207; that span reads AS.

The protein belongs to the triosephosphate isomerase family. Homotetramer; dimer of dimers.

The protein resides in the cytoplasm. The enzyme catalyses D-glyceraldehyde 3-phosphate = dihydroxyacetone phosphate. It participates in carbohydrate biosynthesis; gluconeogenesis. The protein operates within carbohydrate degradation; glycolysis; D-glyceraldehyde 3-phosphate from glycerone phosphate: step 1/1. Involved in the gluconeogenesis. Catalyzes stereospecifically the conversion of dihydroxyacetone phosphate (DHAP) to D-glyceraldehyde-3-phosphate (G3P). In Methanobacterium bryantii, this protein is Triosephosphate isomerase.